The sequence spans 236 residues: MGLGLGVRAAPFTYAAHALAVAAAAMVLVWAIYFRGGLAIEATNKNLIFNVHPVLMLIGYIIIGGEAIMVYRVLPTSNHETNKLIHLVLHGIALVLGAVGIYFAFKNHNESGIANLYSLHSWIGIGTITLYGIQWIVGFVTFFFPGAAPNVKKGVLPWHILFGLFVYILALANAELGFLEKLTFLESSGLDKYGTEAFLVNFTALVVVLFGASVVVAAIAPVRLEEPQGYVPIPEN.

Residues 1 to 13 (MGLGLGVRAAPFT) are Cytoplasmic-facing. The chain crosses the membrane as a helical span at residues 14–34 (YAAHALAVAAAAMVLVWAIYF). The Cytochrome b561 domain occupies 15-219 (AAHALAVAAA…FGASVVVAAI (205 aa)). Residues 35–50 (RGGLAIEATNKNLIFN) are Extracellular-facing. Residues 51–71 (VHPVLMLIGYIIIGGEAIMVY) traverse the membrane as a helical segment. A heme b-binding site is contributed by His-52. 67-75 (AIMVYRVLP) contributes to the L-ascorbate binding site. Topologically, residues 72–84 (RVLPTSNHETNKL) are cytoplasmic. The chain crosses the membrane as a helical span at residues 85–105 (IHLVLHGIALVLGAVGIYFAF). Heme b-binding residues include His-86 and His-120. Residues 106–122 (KNHNESGIANLYSLHSW) are Extracellular-facing. 116-125 (LYSLHSWIGI) contacts monodehydro-L-ascorbate radical. Residues 123 to 143 (IGIGTITLYGIQWIVGFVTFF) traverse the membrane as a helical segment. The Cytoplasmic portion of the chain corresponds to 144 to 153 (FPGAAPNVKK). The helical transmembrane segment at 154–174 (GVLPWHILFGLFVYILALANA) threads the bilayer. A heme b-binding site is contributed by His-159. Residues 175 to 201 (ELGFLEKLTFLESSGLDKYGTEAFLVN) lie on the Extracellular side of the membrane. Residues 202–222 (FTALVVVLFGASVVVAAIAPV) form a helical membrane-spanning segment. Residues 223 to 236 (RLEEPQGYVPIPEN) are Cytoplasmic-facing.

Requires heme b as cofactor.

The protein localises to the membrane. Two-heme-containing cytochrome. Catalyzes ascorbate-dependent trans-membrane electron transfer by utilizing a concerted H(+)/e(-) transfer mechanism. This is Ascorbate-specific transmembrane electron transporter 2 from Zea mays (Maize).